A 508-amino-acid chain; its full sequence is Pentatricopeptide repeat-containing protein At5g48730, chloroplastic (508 aa).

Residues 1–10 (MVSLSTSTSH) show a composition bias toward polar residues. A disordered region spans residues 1–22 (MVSLSTSTSHAPPLPTNRRTAE). The transit peptide at 1–28 (MVSLSTSTSHAPPLPTNRRTAERTFTVR) directs the protein to the chloroplast. PPR repeat units follow at residues 149–183 (NVGIYVKLIVMLGKCKQPEKAHELFQEMINEGCVV), 184–214 (NHEVYTALVSAYSRSGRFDAAFTLLERMKSS), 220–254 (DVHTYSILIKSFLQVFAFDKVQDLLSDMRRQGIRP), 255–290 (NTITYNTLIDAYGKAKMFVEMESTLIQMLGEDDCKP), 291–325 (DSWTMNSTLRAFGGNGQIEMMENCYEKFQSSGIEP), 326–360 (NIRTFNILLDSYGKSGNYKKMSAVMEYMQKYHYSW), 361–395 (TIVTYNVVIDAFGRAGDLKQMEYLFRLMQSERIFP), 396–430 (SCVTLCSLVRAYGRASKADKIGGVLRFIENSDIRL), 431–465 (DLVFFNCLVDAYGRMEKFAEMKGVLELMEKKGFKP), and 466–500 (DKITYRTMVKAYRISGMTTHVKELHGVVESVGEAQ).

It belongs to the PPR family. P subfamily.

The protein resides in the plastid. Its subcellular location is the chloroplast. The polypeptide is Pentatricopeptide repeat-containing protein At5g48730, chloroplastic (Arabidopsis thaliana (Mouse-ear cress)).